Here is a 444-residue protein sequence, read N- to C-terminus: Vacuolar protein sorting-associated protein 4B (444 aa).

An MIT domain is found at threonine 4 to lysine 82. Residues alanine 19–lysine 82 are a coiled coil. Residues lysine 77–asparagine 118 are disordered. Basic and acidic residues predominate over residues proline 86 to aspartate 101. Serine 102 and serine 108 each carry phosphoserine. Residue glycine 174–serine 181 coordinates ATP. Residue serine 410 is modified to Phosphoserine.

Belongs to the AAA ATPase family. Proposed to be monomeric or homodimeric in nucleotide-free form and to oligomerize upon binding to ATP to form two stacked hexameric or heptameric rings with a central pore through which ESCRT-III substrates are translocated in an ATP-dependent manner. In vitro, associates on the inside of a helical tubular structure formed by a CHMP2A-CHMP3 polymer. Interacts with CHMP1A, CHMP1B, CHMP4B and CHMP6. Interacts with CHMP2A. Interacts with VPS4A; the interaction suggests a heteromeric assembly with VPS4A. Interacts with VTA1. As to expression, high level expression seen in the kidney. It is also expressed in the heart, brain, spleen, lung, liver, skeletal muscle, and testis.

It localises to the late endosome membrane. The enzyme catalyses ATP + H2O = ADP + phosphate + H(+). Involved in late steps of the endosomal multivesicular bodies (MVB) pathway. Recognizes membrane-associated ESCRT-III assemblies and catalyzes their disassembly, possibly in combination with membrane fission. Redistributes the ESCRT-III components to the cytoplasm for further rounds of MVB sorting. MVBs contain intraluminal vesicles (ILVs) that are generated by invagination and scission from the limiting membrane of the endosome and mostly are delivered to lysosomes enabling degradation of membrane proteins, such as stimulated growth factor receptors, lysosomal enzymes and lipids. VPS4A/B are required for the exosomal release of SDCBP, CD63 and syndecan. Its function is as follows. (Microbial infection) In conjunction with the ESCRT machinery also appears to function in topologically equivalent membrane fission events, such as the terminal stages of cytokinesis and enveloped virus budding (lentiviruses). The polypeptide is Vacuolar protein sorting-associated protein 4B (Mus musculus (Mouse)).